A 362-amino-acid polypeptide reads, in one-letter code: Glutaminase-asparaginase (362 aa).

An N-terminal signal peptide occupies residues 1 to 25; sequence MKSALKTFVPGALALLLLFPVAAQA. The Asparaginase/glutaminase domain maps to 35–362; sequence ANVVILATGG…KELQRMFWEY (328 aa). Threonine 45 acts as the Acyl-ester intermediate in catalysis. Substrate is bound by residues serine 92 and 125–126; that span reads TD.

Belongs to the asparaginase 1 family. In terms of assembly, homotetramer.

Its subcellular location is the periplasm. It catalyses the reaction L-glutamine + H2O = L-glutamate + NH4(+). It carries out the reaction L-asparagine + H2O = L-aspartate + NH4(+). The sequence is that of Glutaminase-asparaginase from Pseudomonas fluorescens biotype A.